The following is a 123-amino-acid chain: Large ribosomal subunit protein uL18 (123 aa).

This sequence belongs to the universal ribosomal protein uL18 family. In terms of assembly, part of the 50S ribosomal subunit; part of the 5S rRNA/L5/L18/L25 subcomplex. Contacts the 5S and 23S rRNAs.

In terms of biological role, this is one of the proteins that bind and probably mediate the attachment of the 5S RNA into the large ribosomal subunit, where it forms part of the central protuberance. This Chlamydia trachomatis serovar A (strain ATCC VR-571B / DSM 19440 / HAR-13) protein is Large ribosomal subunit protein uL18.